We begin with the raw amino-acid sequence, 356 residues long: Neutral protease 2 homolog UREG_03761 (356 aa).

A signal peptide spans 1 to 19; it reads MRFSSSFLSVLALASQALA. A propeptide spanning residues 20-181 is cleaved from the precursor; the sequence is FPLNDLPTTD…ALPEATLDKR (162 aa). 2 cysteine pairs are disulfide-bonded: Cys189/Cys259 and Cys266/Cys284. His308 serves as a coordination point for Zn(2+). Glu309 is an active-site residue. Positions 312 and 323 each coordinate Zn(2+).

This sequence belongs to the peptidase M35 family. Zn(2+) serves as cofactor.

It is found in the secreted. It carries out the reaction Preferential cleavage of bonds with hydrophobic residues in P1'. Also 3-Asn-|-Gln-4 and 8-Gly-|-Ser-9 bonds in insulin B chain.. Its function is as follows. Secreted metalloproteinase that allows assimilation of proteinaceous substrates. Shows high activities on basic nuclear substrates such as histone and protamine. The chain is Neutral protease 2 homolog UREG_03761 from Uncinocarpus reesii (strain UAMH 1704).